A 358-amino-acid polypeptide reads, in one-letter code: MTLETPVRVLIVDDSAVVRQMLTEILSRDAGIEVVGSAADPLLAREKIKRLNPDVITLDVEMPRMDGLVFLENLMRLRPTPVVMISSLTERGADTTLQALSLGAVDFVSKPKIDVARGLEGYAEEIVSKVKMAAKAKVSALNRPSAPKVTLDMQSAPVAGSALRFRTTDRLIAIGASAGGTEALRVVLEHMPADAPAVVMTQHLPASFSTAFAERLNRHSAMSVREATDGEAILPGHAYLPPGGQHLRIIRDGARWRCRIDDGPPVNRHKPAVDVLFRSVAANAGPNAVGAILTGMGDDGARGLLEMLQAGAPTLVQDEASSVVWGMPGAAYKLGAAQEVVPLDRVAERLLALSAQAR.

One can recognise a Response regulatory domain in the interval 8 to 125 (RVLIVDDSAV…ARGLEGYAEE (118 aa)). At aspartate 59 the chain carries 4-aspartylphosphate. A CheB-type methylesterase domain is found at 165–352 (FRTTDRLIAI…LDRVAERLLA (188 aa)). Residues serine 177, histidine 203, and aspartate 299 contribute to the active site.

It belongs to the CheB family. Phosphorylated by CheA. Phosphorylation of the N-terminal regulatory domain activates the methylesterase activity.

It is found in the cytoplasm. It carries out the reaction [protein]-L-glutamate 5-O-methyl ester + H2O = L-glutamyl-[protein] + methanol + H(+). It catalyses the reaction L-glutaminyl-[protein] + H2O = L-glutamyl-[protein] + NH4(+). Its function is as follows. Involved in chemotaxis. Part of a chemotaxis signal transduction system that modulates chemotaxis in response to various stimuli. Catalyzes the demethylation of specific methylglutamate residues introduced into the chemoreceptors (methyl-accepting chemotaxis proteins or MCP) by CheR. Also mediates the irreversible deamidation of specific glutamine residues to glutamic acid. In Xanthomonas axonopodis pv. citri (strain 306), this protein is Protein-glutamate methylesterase/protein-glutamine glutaminase 1.